The following is a 552-amino-acid chain: Non-structural protein NS1 (552 aa).

Belongs to the orbivirus non-structural protein NS1 family.

The chain is Non-structural protein NS1 (Segment-5) from Bluetongue virus 1 (isolate Australia) (BTV 1).